The following is a 127-amino-acid chain: MSNRKPYVRDMKRTWWSNHPFYRFYMLREATVLPLILFTLFLTFGLGSLVKGPEAWEGWLSFMANPIVVGINIVALLGSLLHAQTFFSMMPQVMPIRLKGKLVDKRIIVLTQWAAVAFISLIVLMVV.

3 helical membrane-spanning segments follow: residues 30–50, 58–78, and 107–127; these read ATVLPLILFTLFLTFGLGSLV, GWLSFMANPIVVGINIVALLG, and IIVLTQWAAVAFISLIVLMVV.

This sequence belongs to the FrdC family. Part of an enzyme complex containing four subunits: a flavoprotein (FrdA), an iron-sulfur protein (FrdB), and two hydrophobic anchor proteins (FrdC and FrdD).

It localises to the cell inner membrane. Functionally, anchors the catalytic components of the fumarate reductase complex to the cell membrane, binds quinones. The protein is Fumarate reductase subunit C of Vibrio atlanticus (strain LGP32) (Vibrio splendidus (strain Mel32)).